The sequence spans 204 residues: Somatotropin (204 aa).

Residues 1–17 (MDRVILLLSVVSLGVSS) form the signal peptide. At Gln-18 the chain carries Pyrrolidone carboxylic acid. His-36 contributes to the Zn(2+) binding site. Cys-69 and Cys-177 are oxidised to a cystine. Glu-186 is a binding site for Zn(2+). A disulfide bond links Cys-194 and Cys-202.

This sequence belongs to the somatotropin/prolactin family.

The protein localises to the secreted. Functionally, growth hormone plays an important role in growth control and is involved in the regulation of several anabolic processes. Implicated as an osmoregulatory substance important for seawater adaptation. This chain is Somatotropin (gh), found in Sebastes schlegelii (Korean rockfish).